Consider the following 390-residue polypeptide: MAMVTGGWGDPGGDTNGVDKAGGSYPRATEDDSASPPGATSDAEPGDEERPGLQVDCVVCGDKSSGKHYGVFTCEGCKSFFKRSIRRNLSYTCRSNRDCQIDQHHRNQCQYCRLKKCFRVGMRKEAVQRGRIPHALPGPAACSPPGATGVEPFTGPPVSELIAQLLRAEPYPAAGRFGGGGAVLGIDNVCELAARLLFSTVEWARHAPFFPELPAADQVALLRLSWSELFVLNAAQAALPLHTAPLLAAAGLHAAPMAAERAVAFMDQVRAFQEQVDKLGRLQVDAAEYGCLKAIALFTPDACGLSDPAHVESLQEKAQVALTEYVRAQYPSQPQRFGRLLLRLPALRAVPASLISQLFFMRLVGKTPIETLIRDMLLSGSTFNWPYGSG.

Positions 1–15 (MAMVTGGWGDPGGDT) are enriched in gly residues. The tract at residues 1-50 (MAMVTGGWGDPGGDTNGVDKAGGSYPRATEDDSASPPGATSDAEPGDEER) is disordered. 2 positions are modified to phosphoserine: Ser35 and Ser41. Positions 54–129 (QVDCVVCGDK…VGMRKEAVQR (76 aa)) form a DNA-binding region, nuclear receptor. An NR C4-type zinc finger spans residues 57–77 (CVVCGDKSSGKHYGVFTCEGC). Ser84 bears the Phosphoserine mark. The NR C4-type zinc-finger motif lies at 93–117 (CRSNRDCQIDQHHRNQCQYCRLKKC). The region spanning 157 to 380 (PVSELIAQLL…TLIRDMLLSG (224 aa)) is the NR LBD domain. Residues 314 to 390 (LQEKAQVALT…STFNWPYGSG (77 aa)) are important for dimerization.

It belongs to the nuclear hormone receptor family. NR2 subfamily. Binds DNA as dimer; homodimer and heterodimer with NR2F2 and probably NR2F1. Interacts with THRB.

It localises to the nucleus. In terms of biological role, transcription factor predominantly involved in transcriptional repression. Binds to promoter/enhancer response elements that contain the imperfect 5'-AGGTCA-3' direct or inverted repeats with various spacings which are also recognized by other nuclear hormone receptors. Involved in modulation of hormonal responses. Represses transcriptional activity of the lutropin-choriogonadotropic hormone receptor/LHCGR gene, the renin/REN gene and the oxytocin-neurophysin/OXT gene. Represses the triiodothyronine-dependent and -independent transcriptional activity of the thyroid hormone receptor gene in a cell type-specific manner. The corepressing function towards thyroid hormone receptor beta/THRB involves at least in part the inhibition of THRB binding to triiodothyronine response elements (TREs) by NR2F6. Inhibits NFATC transcription factor DNA binding and subsequently its transcriptional activity. Acts as transcriptional repressor of IL-17 expression in Th-17 differentiated CD4(+) T cells and may be involved in induction and/or maintenance of peripheral immunological tolerance and autoimmunity. Involved in development of forebrain circadian clock; is required early in the development of the locus coeruleus (LC). The sequence is that of Nuclear receptor subfamily 2 group F member 6 (Nr2f6) from Mus musculus (Mouse).